Reading from the N-terminus, the 313-residue chain is Ribosomal RNA small subunit methyltransferase H (313 aa).

Residues 35 to 37 (GGH), aspartate 55, phenylalanine 79, aspartate 100, and glutamine 107 contribute to the S-adenosyl-L-methionine site.

It belongs to the methyltransferase superfamily. RsmH family.

Its subcellular location is the cytoplasm. It catalyses the reaction cytidine(1402) in 16S rRNA + S-adenosyl-L-methionine = N(4)-methylcytidine(1402) in 16S rRNA + S-adenosyl-L-homocysteine + H(+). Specifically methylates the N4 position of cytidine in position 1402 (C1402) of 16S rRNA. This is Ribosomal RNA small subunit methyltransferase H from Burkholderia multivorans (strain ATCC 17616 / 249).